Here is a 280-residue protein sequence, read N- to C-terminus: Fructose-1,6-bisphosphatase class 1 (280 aa).

The Mg(2+) site is built by E64, D83, L85, and D86. Residues 86-89 (DGSS), Y190, and K221 each bind substrate. E227 is a binding site for Mg(2+).

The protein belongs to the FBPase class 1 family. Homotetramer. The cofactor is Mg(2+).

The protein resides in the cytoplasm. It catalyses the reaction beta-D-fructose 1,6-bisphosphate + H2O = beta-D-fructose 6-phosphate + phosphate. Its pathway is carbohydrate biosynthesis; gluconeogenesis. In Campylobacter hominis (strain ATCC BAA-381 / DSM 21671 / CCUG 45161 / LMG 19568 / NCTC 13146 / CH001A), this protein is Fructose-1,6-bisphosphatase class 1.